We begin with the raw amino-acid sequence, 932 residues long: Isoleucine--tRNA ligase (932 aa).

A 'HIGH' region motif is present at residues 57 to 67 (PYANGNIHLGH). E552 is an L-isoleucyl-5'-AMP binding site. Residues 593 to 597 (KMSKS) carry the 'KMSKS' region motif. Residue K596 coordinates ATP. Residues C889, C892, C911, and C914 each coordinate Zn(2+).

This sequence belongs to the class-I aminoacyl-tRNA synthetase family. IleS type 1 subfamily. Monomer. Requires Zn(2+) as cofactor.

Its subcellular location is the cytoplasm. The enzyme catalyses tRNA(Ile) + L-isoleucine + ATP = L-isoleucyl-tRNA(Ile) + AMP + diphosphate. Functionally, catalyzes the attachment of isoleucine to tRNA(Ile). As IleRS can inadvertently accommodate and process structurally similar amino acids such as valine, to avoid such errors it has two additional distinct tRNA(Ile)-dependent editing activities. One activity is designated as 'pretransfer' editing and involves the hydrolysis of activated Val-AMP. The other activity is designated 'posttransfer' editing and involves deacylation of mischarged Val-tRNA(Ile). This Lactococcus lactis subsp. lactis (strain IL1403) (Streptococcus lactis) protein is Isoleucine--tRNA ligase.